Here is a 123-residue protein sequence, read N- to C-terminus: Small ribosomal subunit protein uS13 (123 aa).

Positions 95-123 (GLPVRGQKTKTNARTRKGPKRTVGRKKKK) are disordered. Basic residues predominate over residues 101–123 (QKTKTNARTRKGPKRTVGRKKKK).

This sequence belongs to the universal ribosomal protein uS13 family. As to quaternary structure, part of the 30S ribosomal subunit. Forms a loose heterodimer with protein S19. Forms two bridges to the 50S subunit in the 70S ribosome.

Located at the top of the head of the 30S subunit, it contacts several helices of the 16S rRNA. In the 70S ribosome it contacts the 23S rRNA (bridge B1a) and protein L5 of the 50S subunit (bridge B1b), connecting the 2 subunits; these bridges are implicated in subunit movement. Contacts the tRNAs in the A and P-sites. In Alkaliphilus metalliredigens (strain QYMF), this protein is Small ribosomal subunit protein uS13.